The sequence spans 57 residues: uncharacterized protein (57 aa).

Residues 10–27 (FGLLWLIIGSEAFHLNAL) traverse the membrane as a helical segment. The stretch at 28 to 55 (KQDHLERMKQYDAKIRLAKHEFDDTSNE) forms a coiled coil.

The protein resides in the membrane. This is an uncharacterized protein from Schizosaccharomyces pombe (strain 972 / ATCC 24843) (Fission yeast).